The sequence spans 359 residues: Stearoyl-CoA desaturase (359 aa).

The Cytoplasmic segment spans residues 1–72 (MPAHLLQEEI…EGPRPKLEYV (72 aa)). The helical transmembrane segment at 73-93 (WRNIILMSLLHLGALYGIILI) threads the bilayer. Asparagine 75 is a substrate binding site. Residues 94-97 (PTCK) are Lumenal-facing. A helical transmembrane segment spans residues 98-118 (IYTLLWAFAYYLLSAVGVTAG). Residues 119-217 (AHRLWSHRTY…EKLVMFQRRY (99 aa)) are Cytoplasmic-facing. The Fe cation site is built by histidine 120 and histidine 125. Positions 120–125 (HRLWSH) match the Histidine box-1 motif. 3 residues coordinate substrate: asparagine 148, arginine 155, and aspartate 156. Histidine 157, histidine 160, and histidine 161 together coordinate Fe cation. The short motif at 157–161 (HRAHH) is the Histidine box-2 element. Positions 188 and 189 each coordinate substrate. Serine 203 carries the phosphoserine modification. The helical transmembrane segment at 218 to 237 (YKPGILLMCFILPTIVPWYC) threads the bilayer. The Lumenal portion of the chain corresponds to 238-241 (WGEA). Residues 242-263 (FPQSLFVATFLRYAIVLNATWL) traverse the membrane as a helical segment. Tryptophan 262 lines the substrate pocket. Topologically, residues 264–359 (VNSAAHLYGY…RTGDESYKSG (96 aa)) are cytoplasmic. Residues histidine 269, histidine 298, histidine 301, and histidine 302 each coordinate Fe cation. Positions 298–302 (HNYHH) match the Histidine box-3 motif.

The protein belongs to the fatty acid desaturase type 1 family. Fe(2+) is required as a cofactor.

It is found in the endoplasmic reticulum membrane. The enzyme catalyses octadecanoyl-CoA + 2 Fe(II)-[cytochrome b5] + O2 + 2 H(+) = (9Z)-octadecenoyl-CoA + 2 Fe(III)-[cytochrome b5] + 2 H2O. It catalyses the reaction hexadecanoyl-CoA + 2 Fe(II)-[cytochrome b5] + O2 + 2 H(+) = (9Z)-hexadecenoyl-CoA + 2 Fe(III)-[cytochrome b5] + 2 H2O. In terms of biological role, stearoyl-CoA desaturase that utilizes O(2) and electrons from reduced cytochrome b5 to introduce the first double bond into saturated fatty acyl-CoA substrates. Catalyzes the insertion of a cis double bond at the delta-9 position into fatty acyl-CoA substrates including palmitoyl-CoA and stearoyl-CoA. Gives rise to a mixture of 16:1 and 18:1 unsaturated fatty acids. Plays an important role in lipid biosynthesis. Plays an important role in regulating the expression of genes that are involved in lipogenesis and in regulating mitochondrial fatty acid oxidation. Plays an important role in body energy homeostasis. Contributes to the biosynthesis of membrane phospholipids, cholesterol esters and triglycerides. This Sus scrofa (Pig) protein is Stearoyl-CoA desaturase (SCD).